The primary structure comprises 416 residues: Phosphatidylinositol 5-phosphate 4-kinase type-2 gamma (416 aa).

One can recognise a PIPK domain in the interval 38–415; it reads ASDPMLSVFM…RFREFISNIF (378 aa).

Post-translationally, phosphorylated, phosphorylation is induced by EGF.

Its subcellular location is the endoplasmic reticulum. It localises to the cytoplasm. It catalyses the reaction a 1,2-diacyl-sn-glycero-3-phospho-(1D-myo-inositol-5-phosphate) + ATP = a 1,2-diacyl-sn-glycero-3-phospho-(1D-myo-inositol-4,5-bisphosphate) + ADP + H(+). It carries out the reaction 1,2-dihexadecanoyl-sn-glycero-3-phospho-(1D-myo-inositol-5-phosphate) + ATP = 1,2-dihexadecanoyl-sn-glycero-3-phospho-(1D-myo-inositol-4,5-bisphosphate) + ADP + H(+). The enzyme catalyses 1,2-dihexadecanoyl-sn-glycero-3-phospho-(1D-myo-inositol-5-phosphate) + GTP = 1,2-dihexadecanoyl-sn-glycero-3-phospho-(1D-myo-inositol-4,5-bisphosphate) + GDP + H(+). In terms of biological role, phosphatidylinositol 5-phosphate 4-kinase with low enzymatic activity. May be a GTP sensor, has higher GTP-dependent kinase activity than ATP-dependent kinase activity. The sequence is that of Phosphatidylinositol 5-phosphate 4-kinase type-2 gamma (pip4k2c) from Danio rerio (Zebrafish).